Consider the following 255-residue polypeptide: MTADIRLFTCLTDNFGVLIHDPATGATAAIDAPEAEPVIQALDREGWVLTDILITHHHSDHVGGVAELKRKYACRVVAPHDRSAEIANVDLRVGQGDIIKVGTLLGRVLETPGHTLDHVSYVFDDEKVVFAADTLFSIGCGRVFEGTYPMMWDSLLKLRALPDSFRLYCGHEYTDSNIKFALTIEPNNPVLKARAEEVTRLRAEGRPTVPTLMGEEKKANVFLRADDPAVAAGVHMKGASGVEVFAELRERKNKS.

Positions 56, 58, 60, 61, 114, 133, and 171 each coordinate Zn(2+).

This sequence belongs to the metallo-beta-lactamase superfamily. Glyoxalase II family. As to quaternary structure, monomer. Zn(2+) is required as a cofactor.

The enzyme catalyses an S-(2-hydroxyacyl)glutathione + H2O = a 2-hydroxy carboxylate + glutathione + H(+). The protein operates within secondary metabolite metabolism; methylglyoxal degradation; (R)-lactate from methylglyoxal: step 2/2. Thiolesterase that catalyzes the hydrolysis of S-D-lactoyl-glutathione to form glutathione and D-lactic acid. The sequence is that of Hydroxyacylglutathione hydrolase from Nitrobacter winogradskyi (strain ATCC 25391 / DSM 10237 / CIP 104748 / NCIMB 11846 / Nb-255).